Reading from the N-terminus, the 145-residue chain is MKVLMQRVSEAHVDVSGRTVGAIDNGLLLFIGIEKHDDTALVDRMVERIIGYRVFADERGKMNWDVRDAGGALLAISQFTLVADTRKGRRPSFSSAADPVLARPLYEHCVAQLKAHGLPVATGVFAAEMQVSLVNDGPVTFMLEM.

Residues 137-138 (GP) carry the Gly-cisPro motif, important for rejection of L-amino acids motif.

The protein belongs to the DTD family. In terms of assembly, homodimer.

The protein localises to the cytoplasm. The catalysed reaction is glycyl-tRNA(Ala) + H2O = tRNA(Ala) + glycine + H(+). It carries out the reaction a D-aminoacyl-tRNA + H2O = a tRNA + a D-alpha-amino acid + H(+). In terms of biological role, an aminoacyl-tRNA editing enzyme that deacylates mischarged D-aminoacyl-tRNAs. Also deacylates mischarged glycyl-tRNA(Ala), protecting cells against glycine mischarging by AlaRS. Acts via tRNA-based rather than protein-based catalysis; rejects L-amino acids rather than detecting D-amino acids in the active site. By recycling D-aminoacyl-tRNA to D-amino acids and free tRNA molecules, this enzyme counteracts the toxicity associated with the formation of D-aminoacyl-tRNA entities in vivo and helps enforce protein L-homochirality. The chain is D-aminoacyl-tRNA deacylase from Alcanivorax borkumensis (strain ATCC 700651 / DSM 11573 / NCIMB 13689 / SK2).